The chain runs to 226 residues: ATP-dependent dethiobiotin synthetase BioD (226 aa).

An ATP-binding site is contributed by 14–19; sequence GIGKTF. Position 18 (Thr18) interacts with Mg(2+). The active site involves Lys39. Residue Ser43 participates in substrate binding. ATP is bound by residues Asp56, 117–120, 177–178, 206–208, and Asn213; these read EGVG, NT, and PHI. Positions 56 and 117 each coordinate Mg(2+).

This sequence belongs to the dethiobiotin synthetase family. Homodimer. Requires Mg(2+) as cofactor.

It is found in the cytoplasm. It catalyses the reaction (7R,8S)-7,8-diammoniononanoate + CO2 + ATP = (4R,5S)-dethiobiotin + ADP + phosphate + 3 H(+). It participates in cofactor biosynthesis; biotin biosynthesis; biotin from 7,8-diaminononanoate: step 1/2. Its function is as follows. Catalyzes a mechanistically unusual reaction, the ATP-dependent insertion of CO2 between the N7 and N8 nitrogen atoms of 7,8-diaminopelargonic acid (DAPA, also called 7,8-diammoniononanoate) to form a ureido ring. In Xylella fastidiosa (strain M12), this protein is ATP-dependent dethiobiotin synthetase BioD.